Here is a 251-residue protein sequence, read N- to C-terminus: MNLISIPAFQDNYIWVLADDKDRCVIVDPGEAAPVLKAIEENGWQPEAILLTHHHNDHVGGVPALCAKFPHLEVYGPQETQNKGTTCVVDEGQNVLILEWEFSVFATPGHTSGHICFYSSPYLFCGDTMFSGGCGRLFEGTPEQMYQSFQKINALPEETIICCAHEYTLANMKFAASILPEDRAIQDYYHKVKELRAKNLSTLPVILKNEREINLFLRTDDIDLINKINQETKLQQPEQRFAWLRSKKDNF.

7 residues coordinate Zn(2+): histidine 53, histidine 55, aspartate 57, histidine 58, histidine 110, aspartate 127, and histidine 165.

Belongs to the metallo-beta-lactamase superfamily. Glyoxalase II family. Monomer. The cofactor is Zn(2+).

The catalysed reaction is an S-(2-hydroxyacyl)glutathione + H2O = a 2-hydroxy carboxylate + glutathione + H(+). It participates in secondary metabolite metabolism; methylglyoxal degradation; (R)-lactate from methylglyoxal: step 2/2. In terms of biological role, thiolesterase that catalyzes the hydrolysis of S-D-lactoyl-glutathione to form glutathione and D-lactic acid. The polypeptide is Hydroxyacylglutathione hydrolase (Enterobacter sp. (strain 638)).